Reading from the N-terminus, the 364-residue chain is Homeobox protein Nkx-6.1 (364 aa).

The tract at residues 35–134 (LYPATYPPLP…SSSSSASATS (100 aa)) is disordered. Low complexity-rich tracts occupy residues 48 to 92 (PSSS…LSAA) and 109 to 134 (ASGA…SATS). Residues 101–268 (LSRPSMPVAS…KYLAGPERAR (168 aa)) form a repressor domain region. The residue at position 189 (Arg-189) is an Asymmetric dimethylarginine. The segment at residues 236 to 295 (RKHTRPTFSGQQIFALEKTFEQTKYLAGPERARLAYSLGMTESQVKVWFQNRRTKWRKKH) is a DNA-binding region (homeobox). Positions 294-364 (KHAAEMATAK…LHASEAEGSS (71 aa)) are disordered. The span at 304 to 317 (KKQDSETERLKGTS) shows a compositional bias: basic and acidic residues. Positions 306–364 (QDSETERLKGTSENEEEDDDYNKPLDPNSDDEKITQLLKKHKSSSGGLLLHASEAEGSS) are involved in DNA-binding.

In terms of tissue distribution, pancreatic beta cells.

Its subcellular location is the nucleus. Functionally, together with NKX2-2 and IRX3 acts to restrict the generation of motor neurons to the appropriate region of the neural tube. Belongs to the class II proteins of neuronal progenitor factors, which are induced by SHH signals. Transcription factor which binds to specific A/T-rich DNA sequences in the promoter regions of a number of genes. Involved in transcriptional regulation in islet beta cells. Binds to the insulin promoter and is involved in regulation of the insulin gene. The protein is Homeobox protein Nkx-6.1 (NKX6-1) of Mesocricetus auratus (Golden hamster).